We begin with the raw amino-acid sequence, 288 residues long: Eukaryotic translation initiation factor 3 subunit G (288 aa).

The tract at residues 1-33 (MSRVANNRDWADDEDLEDSNELPQSTTTTNKDG) is disordered. Acidic residues predominate over residues 11–20 (ADDEDLEDSN). Residues 21 to 33 (ELPQSTTTTNKDG) show a composition bias toward polar residues. An RRM domain is found at 208–286 (ATLRVTNVSE…LILRVEFAKK (79 aa)).

This sequence belongs to the eIF-3 subunit G family. Component of the eukaryotic translation initiation factor 3 (eIF-3) complex.

The protein resides in the cytoplasm. Its function is as follows. RNA-binding component of the eukaryotic translation initiation factor 3 (eIF-3) complex, which is involved in protein synthesis of a specialized repertoire of mRNAs and, together with other initiation factors, stimulates binding of mRNA and methionyl-tRNAi to the 40S ribosome. The eIF-3 complex specifically targets and initiates translation of a subset of mRNAs involved in cell proliferation. This subunit can bind 18S rRNA. This Sclerotinia sclerotiorum (strain ATCC 18683 / 1980 / Ss-1) (White mold) protein is Eukaryotic translation initiation factor 3 subunit G (tif35).